The chain runs to 547 residues: G protein-coupled receptor associated sorting protein 3 (547 aa).

Residues methionine 1–alanine 10 show a composition bias toward basic residues. 2 disordered regions span residues methionine 1–glycine 32 and threonine 80–lysine 102.

Belongs to the GPRASP family. Homodimer. Highly expressed in brain. Not expressed in lung or liver. Down-regulated in brain from patients suffering from Alzheimer disease.

The protein resides in the cytoplasm. Its subcellular location is the nucleus. Functionally, survival and differentiation promoting protein that plays a role in the regulation of neurosynaptogenesis. Induces phosphatase PP2A activity which results in APP dephosphorylation and inhibits BACE1-mediated processing of APP. The protein is G protein-coupled receptor associated sorting protein 3 of Homo sapiens (Human).